The chain runs to 76 residues: DNA-directed RNA polymerase subunit Rpo10 (76 aa).

Positions 16, 19, 53, and 54 each coordinate Zn(2+).

This sequence belongs to the archaeal Rpo10/eukaryotic RPB10 RNA polymerase subunit family. As to quaternary structure, part of the RNA polymerase complex. Zn(2+) serves as cofactor.

It localises to the cytoplasm. The catalysed reaction is RNA(n) + a ribonucleoside 5'-triphosphate = RNA(n+1) + diphosphate. DNA-dependent RNA polymerase (RNAP) catalyzes the transcription of DNA into RNA using the four ribonucleoside triphosphates as substrates. The chain is DNA-directed RNA polymerase subunit Rpo10 from Archaeoglobus fulgidus (strain ATCC 49558 / DSM 4304 / JCM 9628 / NBRC 100126 / VC-16).